We begin with the raw amino-acid sequence, 95 residues long: Aspartyl/glutamyl-tRNA(Asn/Gln) amidotransferase subunit C (95 aa).

It belongs to the GatC family. As to quaternary structure, heterotrimer of A, B and C subunits.

It carries out the reaction L-glutamyl-tRNA(Gln) + L-glutamine + ATP + H2O = L-glutaminyl-tRNA(Gln) + L-glutamate + ADP + phosphate + H(+). The enzyme catalyses L-aspartyl-tRNA(Asn) + L-glutamine + ATP + H2O = L-asparaginyl-tRNA(Asn) + L-glutamate + ADP + phosphate + 2 H(+). Functionally, allows the formation of correctly charged Asn-tRNA(Asn) or Gln-tRNA(Gln) through the transamidation of misacylated Asp-tRNA(Asn) or Glu-tRNA(Gln) in organisms which lack either or both of asparaginyl-tRNA or glutaminyl-tRNA synthetases. The reaction takes place in the presence of glutamine and ATP through an activated phospho-Asp-tRNA(Asn) or phospho-Glu-tRNA(Gln). This Sinorhizobium fredii (strain NBRC 101917 / NGR234) protein is Aspartyl/glutamyl-tRNA(Asn/Gln) amidotransferase subunit C.